Here is a 78-residue protein sequence, read N- to C-terminus: Large ribosomal subunit protein uL29 (78 aa).

This sequence belongs to the universal ribosomal protein uL29 family.

The polypeptide is Large ribosomal subunit protein uL29 (Rhodococcus opacus (strain B4)).